A 540-amino-acid chain; its full sequence is MLMATVSPARREPTPQAVRASPMPSAAAALVRRGGGGSGGTVLGKYELGRVLGQGSFAKVYQARHLETDECVAIKVLDKEKAVKGGMVHLVKREINVLRRVRHPNIVQLFEVMASKTKIYFVMEYVRGGELFSRVSKGRLREDTARRYFQQLVSAVDFCHARGVFHRDLKPENLLVDENGDLKVSDFGLAAGPDQFDPDGLLHTFCGTPAYVAPEVLRRRGYDGAKADIWSCGVILFALMAGYLPFHDHNIMVLYRKIYNGEFRCPRWFSKDFTRLITRLLDANPKTRITVPEIIESDWFKKGYKPVKFYIEDDKLYNLSDDVLNLEPADPVPPPLGLAPPVPPPPQGDDPDGSGSESDSSVVSCPATLSTGESQRVRGSLPRPASLNAFDIISFSKGFNLSGLFEERGNEIRFVSGEPMSDIVKKLEEIAKVKSFTVRRKDWRVSIEGTREGVKGPLTIGAEIFELTPSLVVVEVKRKAGDNEEYEDFCNMELKPGMQHLVHQMLPAPNGTPVSEKVERSSSLQAPLTLKLIGTEGSMS.

Residues 1–23 (MLMATVSPARREPTPQAVRASPM) form a disordered region. Residues 46-300 (YELGRVLGQG…VPEIIESDWF (255 aa)) form the Protein kinase domain. Residues 52–60 (LGQGSFAKV) and Lys75 contribute to the ATP site. Residue Asp168 is the Proton acceptor of the active site. Positions 186-215 (DFGLAAGPDQFDPDGLLHTFCGTPAYVAPE) are activation loop. Pro residues predominate over residues 333–348 (PPPLGLAPPVPPPPQG). Residues 333 to 380 (PPPLGLAPPVPPPPQGDDPDGSGSESDSSVVSCPATLSTGESQRVRGS) form a disordered region. A compositionally biased stretch (low complexity) spans 353-364 (GSGSESDSSVVS). Residues 370–406 (STGESQRVRGSLPRPASLNAFDIISFSKGFNLSGLFE) enclose the NAF domain. Residues 409 to 438 (GNEIRFVSGEPMSDIVKKLEEIAKVKSFTV) form a PPI region.

This sequence belongs to the protein kinase superfamily. CAMK Ser/Thr protein kinase family. SNF1 subfamily. Mg(2+) is required as a cofactor. In terms of processing, autophosphorylated. In terms of tissue distribution, expressed at low levels in leaf blades.

It carries out the reaction L-seryl-[protein] + ATP = O-phospho-L-seryl-[protein] + ADP + H(+). It catalyses the reaction L-threonyl-[protein] + ATP = O-phospho-L-threonyl-[protein] + ADP + H(+). Its function is as follows. Involved in drought stress tolerance. CIPK serine-threonine protein kinases interact with CBL proteins. Binding of a CBL protein to the regulatory NAF domain of CIPK protein lead to the activation of the kinase in a calcium-dependent manner. The sequence is that of CBL-interacting protein kinase 12 (CIPK12) from Oryza sativa subsp. japonica (Rice).